A 37-amino-acid chain; its full sequence is MVEPLLSGIVLGMITVSALGLFVAAYLQYRRGNQFEI.

Residues 5–25 (LLSGIVLGMITVSALGLFVAA) form a helical membrane-spanning segment.

This sequence belongs to the PetG family. In terms of assembly, the 4 large subunits of the cytochrome b6-f complex are cytochrome b6, subunit IV (17 kDa polypeptide, PetD), cytochrome f and the Rieske protein, while the 4 small subunits are PetG, PetL, PetM and PetN. The complex functions as a dimer.

Its subcellular location is the plastid. It is found in the chloroplast thylakoid membrane. In terms of biological role, component of the cytochrome b6-f complex, which mediates electron transfer between photosystem II (PSII) and photosystem I (PSI), cyclic electron flow around PSI, and state transitions. PetG is required for either the stability or assembly of the cytochrome b6-f complex. In Trieres chinensis (Marine centric diatom), this protein is Cytochrome b6-f complex subunit 5.